Consider the following 253-residue polypeptide: Phycoerythrobilin:ferredoxin oxidoreductase (253 aa).

This sequence belongs to the HY2 family.

The enzyme catalyses (3Z)-phycoerythrobilin + oxidized 2[4Fe-4S]-[ferredoxin] = 15,16-dihydrobiliverdin + reduced 2[4Fe-4S]-[ferredoxin] + 2 H(+). Catalyzes the two-electron reduction of the C2 and C3(1) diene system of 15,16-dihydrobiliverdin. The protein is Phycoerythrobilin:ferredoxin oxidoreductase (pebB) of Prochlorococcus marinus (strain MIT 9215).